Reading from the N-terminus, the 388-residue chain is Quinolone resistance protein NorA (388 aa).

The next 12 membrane-spanning stretches (helical) occupy residues 5–25 (IFVLYFNIFLIFLGIGLVIPV), 42–62 (LLVAAFALSQMIISPFGGTLA), 69–89 (LIICIGLILFSVSEFMFAVGH), 99–119 (VIGGMSAGMVMPGVTGLIADI), 129–149 (FGYMSAIINSGFILGPGIGGF), 157–177 (MPFYFAGALGILAFIMSIVLI), 201–221 (WKVFITPVILTLVLSFGLSAF), 239–259 (DISIAITGGGIFGALFQIYFF), 269–289 (LTFIAWSLLYSVVVLILLVFA), 293–313 (WSIMLISFVVFIGFDMIRPAI), 331–351 (LNSTFTSMGNFIGPLIAGALF), and 355–375 (IEAPIYMAIGVSLAGVVIVLI).

This sequence belongs to the major facilitator superfamily. TCR/Tet family.

It is found in the cell membrane. Involved in quinolone resistance. May constitute a membrane-associated active efflux pump of hydrophilic quinolones. The polypeptide is Quinolone resistance protein NorA (norA) (Staphylococcus aureus (strain COL)).